We begin with the raw amino-acid sequence, 236 residues long: Enolase-phosphatase E1 (236 aa).

The protein belongs to the HAD-like hydrolase superfamily. MasA/MtnC family. In terms of assembly, monomer. The cofactor is Mg(2+).

It carries out the reaction 5-methylsulfanyl-2,3-dioxopentyl phosphate + H2O = 1,2-dihydroxy-5-(methylsulfanyl)pent-1-en-3-one + phosphate. It participates in amino-acid biosynthesis; L-methionine biosynthesis via salvage pathway; L-methionine from S-methyl-5-thio-alpha-D-ribose 1-phosphate: step 3/6. Its pathway is amino-acid biosynthesis; L-methionine biosynthesis via salvage pathway; L-methionine from S-methyl-5-thio-alpha-D-ribose 1-phosphate: step 4/6. Functionally, bifunctional enzyme that catalyzes the enolization of 2,3-diketo-5-methylthiopentyl-1-phosphate (DK-MTP-1-P) into the intermediate 2-hydroxy-3-keto-5-methylthiopentenyl-1-phosphate (HK-MTPenyl-1-P), which is then dephosphorylated to form the acireductone 1,2-dihydroxy-3-keto-5-methylthiopentene (DHK-MTPene). The chain is Enolase-phosphatase E1 from Frankia alni (strain DSM 45986 / CECT 9034 / ACN14a).